A 442-amino-acid polypeptide reads, in one-letter code: F-box/FBD/LRR-repeat protein At3g14710 (442 aa).

In terms of domain architecture, F-box spans Asp26 to Thr73. LRR repeat units follow at residues Asn126 to Pro147, Ser151 to Pro172, and Asn173 to Leu194. The FBD domain maps to Val370–Ser414.

The sequence is that of F-box/FBD/LRR-repeat protein At3g14710 from Arabidopsis thaliana (Mouse-ear cress).